The chain runs to 289 residues: Diaminopimelate epimerase (289 aa).

Asparagine 13, glutamine 47, and asparagine 67 together coordinate substrate. Cysteine 76 (proton donor) is an active-site residue. Substrate contacts are provided by residues glycine 77–asparagine 78, asparagine 167, asparagine 200, and glutamate 218–arginine 219. Cysteine 227 (proton acceptor) is an active-site residue. Glycine 228–threonine 229 contributes to the substrate binding site.

Belongs to the diaminopimelate epimerase family. Homodimer.

It is found in the cytoplasm. It catalyses the reaction (2S,6S)-2,6-diaminopimelate = meso-2,6-diaminopimelate. It participates in amino-acid biosynthesis; L-lysine biosynthesis via DAP pathway; DL-2,6-diaminopimelate from LL-2,6-diaminopimelate: step 1/1. In terms of biological role, catalyzes the stereoinversion of LL-2,6-diaminopimelate (L,L-DAP) to meso-diaminopimelate (meso-DAP), a precursor of L-lysine and an essential component of the bacterial peptidoglycan. This is Diaminopimelate epimerase from Burkholderia pseudomallei (strain 668).